Here is a 493-residue protein sequence, read N- to C-terminus: Glutamate--tRNA ligase (493 aa).

A 'HIGH' region motif is present at residues proline 10 to leucine 20. The 'KMSKS' region motif lies at lysine 254–arginine 258. Residue lysine 257 coordinates ATP.

This sequence belongs to the class-I aminoacyl-tRNA synthetase family. Glutamate--tRNA ligase type 1 subfamily. Monomer.

The protein localises to the cytoplasm. It carries out the reaction tRNA(Glu) + L-glutamate + ATP = L-glutamyl-tRNA(Glu) + AMP + diphosphate. In terms of biological role, catalyzes the attachment of glutamate to tRNA(Glu) in a two-step reaction: glutamate is first activated by ATP to form Glu-AMP and then transferred to the acceptor end of tRNA(Glu). The sequence is that of Glutamate--tRNA ligase from Corynebacterium efficiens (strain DSM 44549 / YS-314 / AJ 12310 / JCM 11189 / NBRC 100395).